A 401-amino-acid chain; its full sequence is ATP-dependent RNA helicase eIF4A (401 aa).

Residues Asp-28–Gln-56 carry the Q motif motif. Residues Ile-59–Ile-229 enclose the Helicase ATP-binding domain. ATP is bound at residue Ala-72–Thr-79. Positions Asp-177–Asp-180 match the DEAD box motif. Residues Gly-240–Ile-401 enclose the Helicase C-terminal domain.

Belongs to the DEAD box helicase family. eIF4A subfamily. In terms of assembly, component of the eIF4F complex, which composition varies with external and internal environmental conditions. It is composed of at least eIF4A, eIF4E and eIF4G.

Its subcellular location is the cytoplasm. It catalyses the reaction ATP + H2O = ADP + phosphate + H(+). In terms of biological role, ATP-dependent RNA helicase which is a subunit of the eIF4F complex involved in cap recognition and is required for mRNA binding to ribosome. In the current model of translation initiation, eIF4A unwinds RNA secondary structures in the 5'-UTR of mRNAs which is necessary to allow efficient binding of the small ribosomal subunit, and subsequent scanning for the initiator codon. The polypeptide is ATP-dependent RNA helicase eIF4A (TIF1) (Cryptococcus neoformans var. neoformans serotype D (strain B-3501A) (Filobasidiella neoformans)).